The chain runs to 193 residues: Nucleoside triphosphate pyrophosphatase (193 aa).

The Proton acceptor role is filled by aspartate 69.

Belongs to the Maf family. Requires a divalent metal cation as cofactor.

The protein localises to the cytoplasm. It catalyses the reaction a ribonucleoside 5'-triphosphate + H2O = a ribonucleoside 5'-phosphate + diphosphate + H(+). The catalysed reaction is a 2'-deoxyribonucleoside 5'-triphosphate + H2O = a 2'-deoxyribonucleoside 5'-phosphate + diphosphate + H(+). Its function is as follows. Nucleoside triphosphate pyrophosphatase. May have a dual role in cell division arrest and in preventing the incorporation of modified nucleotides into cellular nucleic acids. The chain is Nucleoside triphosphate pyrophosphatase from Parasynechococcus marenigrum (strain WH8102).